Consider the following 129-residue polypeptide: D-ribose pyranase (129 aa).

The Proton donor role is filled by His-20. Substrate is bound by residues Asp-28, His-96, and 118–120 (YAN).

This sequence belongs to the RbsD / FucU family. RbsD subfamily. In terms of assembly, homodecamer.

The protein resides in the cytoplasm. It catalyses the reaction beta-D-ribopyranose = beta-D-ribofuranose. It functions in the pathway carbohydrate metabolism; D-ribose degradation; D-ribose 5-phosphate from beta-D-ribopyranose: step 1/2. Catalyzes the interconversion of beta-pyran and beta-furan forms of D-ribose. This Streptomyces avermitilis (strain ATCC 31267 / DSM 46492 / JCM 5070 / NBRC 14893 / NCIMB 12804 / NRRL 8165 / MA-4680) protein is D-ribose pyranase.